The primary structure comprises 369 residues: MTVFTPLVLVCAGGTGGHLFPAQSLAYALKDRGIRVALATDARVDSIAGDFPAEEIVTIASATPSGRSVLRRAGAVVTLGRGFGQAARAVRRLNPAAVVGFGGYPTVPPMLAAQLLRVPTILHEQNAVMGRANGFLAKGARVIATGFKEVRGVPEKATARRVHTGNPIRPAVLAVAETPYPSLDADAPLRLLVFGGSQGARVMSEVVPAAIEKLPQDLRARLHLVQQARPEDLTATQNRYLAMGLGGIEAAPFFKDLPGRMASAHLVVARSGASTVSELAAIGRPAILVPLPGALDQDQAANAATLAQIGAALSIPQSAFTPDRLAAELVDLFEAPRKLTQAAAAAKTARILDAADRLAALVAETAAAT.

UDP-N-acetyl-alpha-D-glucosamine contacts are provided by residues 15-17 (TGG), asparagine 126, arginine 169, serine 197, and glutamine 299.

Belongs to the glycosyltransferase 28 family. MurG subfamily.

Its subcellular location is the cell inner membrane. The enzyme catalyses di-trans,octa-cis-undecaprenyl diphospho-N-acetyl-alpha-D-muramoyl-L-alanyl-D-glutamyl-meso-2,6-diaminopimeloyl-D-alanyl-D-alanine + UDP-N-acetyl-alpha-D-glucosamine = di-trans,octa-cis-undecaprenyl diphospho-[N-acetyl-alpha-D-glucosaminyl-(1-&gt;4)]-N-acetyl-alpha-D-muramoyl-L-alanyl-D-glutamyl-meso-2,6-diaminopimeloyl-D-alanyl-D-alanine + UDP + H(+). It participates in cell wall biogenesis; peptidoglycan biosynthesis. Its function is as follows. Cell wall formation. Catalyzes the transfer of a GlcNAc subunit on undecaprenyl-pyrophosphoryl-MurNAc-pentapeptide (lipid intermediate I) to form undecaprenyl-pyrophosphoryl-MurNAc-(pentapeptide)GlcNAc (lipid intermediate II). In Methylorubrum extorquens (strain CM4 / NCIMB 13688) (Methylobacterium extorquens), this protein is UDP-N-acetylglucosamine--N-acetylmuramyl-(pentapeptide) pyrophosphoryl-undecaprenol N-acetylglucosamine transferase.